A 678-amino-acid polypeptide reads, in one-letter code: MDTPRPQLLDFQFHQNNDSFTLHFQQRLILTHSKDNPCLWIGSGIADIDMFRGNFSIKDKLQEKIALTDAIVSQSPDGWLIHFSRGSDISATLNISADDQGRLLLELQNDNLNHNRIWLRLAAQPEDHIYGCGEQFSYFDLRGKPFPLWTSEQGVGRNKQTYVTWQADCKENAGGDYYWTFFPQPTFVSTQKYYCHVDNSCYMNFDFSAPEYHELALWEDKATLRFECADTYISLLEKLTALLGRQPELPDWIYDGVTLGIQGGTEVCQKKLDTMRNAGVKVNGIWAQDWSGIRMTSFGKRVMWNWKWNSENYPQLDSRIKQWNQEGVQFLAYINPYVASDKDLCEEAAQHGYLAKDASGGDYLVEFGEFYGGVVDLTNPEAYAWFKEVIKKNMIELGCGGWMADFGEYLPTDTYLHNGVSAEIMHNAWPALWAKCNYEALEETGKLGEILFFMRAGSTGSQKYSTMMWAGDQNVDWSLDDGLASVVPAALSLAMTGHGLHHSDIGGYTTLFEMKRSKELLLRWCDFSAFTPMMRTHEGNRPGDNWQFDGDAETIAHFARMTTVFTTLKPYLKEAVALNAKSGLPVMRPLFLHYEDDAHTYTLKYQYLLGRDILVAPVHEEGRSDWTLYLPEDNWVHAWTGEAFRGGEVTVNAPIGKPPVFYRADSEWAALFASLKSI.

Residues glutamine 288, arginine 301, valine 302, and tryptophan 304 each contribute to the a 6-sulfo-alpha-D-quinovosyldiacylglycerol site. The active-site Nucleophile is aspartate 405. Glutamate 408 is a catalytic residue. The Proton donor role is filled by aspartate 472. Histidine 537 contacts a 6-sulfo-alpha-D-quinovosyldiacylglycerol.

Belongs to the glycosyl hydrolase 31 family.

The catalysed reaction is a 6-sulfo-alpha-D-quinovosyldiacylglycerol + H2O = 6-sulfo-alpha-D-quinovose + a 1,2-diacyl-sn-glycerol. The enzyme catalyses 3-(6-sulfo-alpha-D-quinovosyl)glycerol + H2O = 6-sulfo-alpha-D-quinovose + glycerol. It participates in glycolipid metabolism. Is inactivated in vitro by the mechanism-based inactivator 5-fluoro-beta-L-idopyranosyl fluoride (5FIdoF) that yields a covalent glycosyl-enzyme complex with the active site nucleophile Asp-405. In terms of biological role, catalyzes the hydrolysis of sulfoquinovosyl diacylglycerides (SQDG) to sulfoquinovose (SQ), which is then degraded by E.coli through the SQ Embden-Meyerhof-Parnas (SQ-EMP) sulfoglycolysis pathway as a source of carbon and sulfur. Therefore, is likely involved in the utilization of the sulfoquinovose headgroup found in ubiquitous plant sulfolipids. Is also able to hydrolyze simple sulfoquinovosides such as sulfoquinovosyl glycerol (SQGro). In vitro, can use the substrate analog para-nitrophenyl alpha-sulfoquinovoside (PNPSQ), but shows no detectable activity toward 4-nitrophenyl alpha-D-glucopyranoside (PNPGlc). Is a retaining glycoside hydrolase, since it forms the alpha anomer of SQ. Also exhibits some alpha-glucosidase activity against alpha-glucosyl fluoride in vitro, although natural substrates, such as alpha-glucobioses are scarcely hydrolyzed. The sequence is that of Sulfoquinovosidase from Escherichia coli (strain K12).